The sequence spans 309 residues: tRNA dimethylallyltransferase (309 aa).

Residue 10–17 participates in ATP binding; it reads GPTAVGKT. 12-17 contributes to the substrate binding site; the sequence is TAVGKT. The tract at residues 35–38 is interaction with substrate tRNA; that stretch reads DSMQ.

The protein belongs to the IPP transferase family. As to quaternary structure, monomer. Mg(2+) is required as a cofactor.

The catalysed reaction is adenosine(37) in tRNA + dimethylallyl diphosphate = N(6)-dimethylallyladenosine(37) in tRNA + diphosphate. Functionally, catalyzes the transfer of a dimethylallyl group onto the adenine at position 37 in tRNAs that read codons beginning with uridine, leading to the formation of N6-(dimethylallyl)adenosine (i(6)A). This is tRNA dimethylallyltransferase from Clostridium beijerinckii (strain ATCC 51743 / NCIMB 8052) (Clostridium acetobutylicum).